The primary structure comprises 116 residues: Cation channel sperm-associated auxiliary subunit TMEM262 (116 aa).

Residues Met-1 to Leu-16 are Cytoplasmic-facing. Residues Met-17–His-38 form a helical membrane-spanning segment. Residues Asn-39 to Phe-51 lie on the Extracellular side of the membrane. The helical transmembrane segment at Arg-52 to Ser-72 threads the bilayer. Over Leu-73–Arg-84 the chain is Cytoplasmic. Residues Cys-85–Leu-107 form a helical membrane-spanning segment. The Extracellular segment spans residues Ala-108–His-116.

As to quaternary structure, component of the CatSper complex or CatSpermasome composed of the core pore-forming members CATSPER1, CATSPER2, CATSPER3 and CATSPER4 as well as auxiliary members CATSPERB, CATSPERG, CATSPERD, CATSPERE, CATSPERZ, C2CD6/CATSPERT, SLCO6C1, TMEM249, TMEM262 and EFCAB9. HSPA1 may be an additional auxiliary complex member. The core complex members CATSPER1, CATSPER2, CATSPER3 and CATSPER4 form a heterotetrameric channel. The auxiliary CATSPERB, CATSPERG2, CATSPERD and CATSPERE subunits form a pavilion-like structure over the pore which stabilizes the complex through interactions with CATSPER4, CATSPER3, CATSPER1 and CATSPER2 respectively. SLCO6C1 interacts with CATSPERE and TMEM262/CATSPERH interacts with CATSPERB, further stabilizing the complex. C2CD6/CATSPERT interacts at least with CATSPERD and is required for targeting the CatSper complex in the flagellar membrane.

It is found in the cell projection. Its subcellular location is the cilium. The protein resides in the flagellum membrane. Functionally, auxiliary component of the CatSper complex, a complex involved in sperm cell hyperactivation. The protein is Cation channel sperm-associated auxiliary subunit TMEM262 of Mus musculus (Mouse).